The primary structure comprises 162 residues: uncharacterized protein (162 aa).

The stretch at D129–G161 forms a coiled coil.

This is an uncharacterized protein from Aquifex aeolicus (strain VF5).